We begin with the raw amino-acid sequence, 138 residues long: Phospholipase A2 group V (138 aa).

An N-terminal signal peptide occupies residues 1-20; that stretch reads MKGLLPLAWFLACSVPAVQG. Cystine bridges form between Cys-46-Cys-137, Cys-48-Cys-64, Cys-63-Cys-117, Cys-70-Cys-110, Cys-79-Cys-103, and Cys-97-Cys-108. Residues Tyr-47, Gly-49, and Gly-51 each contribute to the Ca(2+) site. His-67 is a catalytic residue. Asp-68 provides a ligand contact to Ca(2+). Residue Asp-111 is part of the active site.

This sequence belongs to the phospholipase A2 family. It depends on Ca(2+) as a cofactor. This enzyme lacks one of the seven disulfide bonds found in similar PLA2 proteins. In terms of tissue distribution, heart, placenta and less abundantly, in lung. Detected in the outer and inner plexiform layers of the retina (at protein level). Expressed in monocytes and macrophages.

The protein localises to the secreted. It is found in the cell membrane. It localises to the cytoplasmic vesicle. The protein resides in the phagosome. Its subcellular location is the recycling endosome. The protein localises to the golgi apparatus. It is found in the cis-Golgi network. It localises to the trans-Golgi network. The enzyme catalyses a 1,2-diacyl-sn-glycero-3-phosphocholine + H2O = a 1-acyl-sn-glycero-3-phosphocholine + a fatty acid + H(+). It catalyses the reaction 1-hexadecanoyl-2-(9Z-octadecenoyl)-sn-glycero-3-phosphocholine + H2O = 1-hexadecanoyl-sn-glycero-3-phosphocholine + (9Z)-octadecenoate + H(+). It carries out the reaction 1-hexadecanoyl-2-(5Z,8Z,11Z,14Z-eicosatetraenoyl)-sn-glycero-3-phosphocholine + H2O = 1-hexadecanoyl-sn-glycero-3-phosphocholine + (5Z,8Z,11Z,14Z)-eicosatetraenoate + H(+). The catalysed reaction is 1-hexadecanoyl-2-(9Z,12Z-octadecadienoyl)-sn-glycero-3-phosphoethanolamine + H2O = 1-hexadecanoyl-sn-glycero-3-phosphoethanolamine + (9Z,12Z)-octadecadienoate + H(+). The enzyme catalyses 1-hexadecanoyl-2-(5Z,8Z,11Z,14Z-eicosatetraenoyl)-sn-glycero-3-phosphoethanolamine + H2O = 1-hexadecanoyl-sn-glycero-3-phosphoethanolamine + (5Z,8Z,11Z,14Z)-eicosatetraenoate + H(+). It catalyses the reaction 1-octadecanoyl-2-(5Z,8Z,11Z,14Z-eicosatetraenoyl)-sn-glycero-3-phospho-(1D-myo-inositol) + H2O = 1-octadecanoyl-sn-glycero-3-phospho-(1D-myo-inositol) + (5Z,8Z,11Z,14Z)-eicosatetraenoate + H(+). It carries out the reaction 1-hexadecanoyl-2-(9Z-octadecenoyl)-sn-glycero-3-phosphoglycerol + H2O = 1-hexadecanoyl-sn-glycero-3-phosphoglycerol + (9Z)-octadecenoate + H(+). The catalysed reaction is N-hexadecanoyl-1,2-di-(9Z-octadecenoyl)-sn-glycero-3-phosphoethanolamine + H2O = N-hexadecanoyl-1-(9Z-octadecenoyl)-sn-glycero-3-phosphoethanolamine + (9Z)-octadecenoate + H(+). The enzyme catalyses 1'-[1,2-di-(9Z-octadecenoyl)-sn-glycero-3-phospho]-3'-[1-(9Z-octadecenoyl)-sn-glycero-3-phospho]-glycerol + H2O = 1',3'-bis-[1-(9Z-octadecenoyl)-sn-glycero-3-phospho]-glycerol + (9Z)-octadecenoate + H(+). It catalyses the reaction 1',3'-bis[1,2-di-(9Z-octadecenoyl)-sn-glycero-3-phospho]-glycerol + H2O = 1'-[1,2-di-(9Z-octadecenoyl)-sn-glycero-3-phospho]-3'-[1-(9Z-octadecenoyl)-sn-glycero-3-phospho]-glycerol + (9Z)-octadecenoate + H(+). Its pathway is lipid metabolism; phospholipid metabolism. It functions in the pathway lipid metabolism; leukotriene B4 biosynthesis. The protein operates within lipid metabolism; leukotriene C4 biosynthesis. With respect to regulation, activated by cardiolipin. In terms of biological role, secretory calcium-dependent phospholipase A2 that primarily targets extracellular phospholipids. Hydrolyzes the ester bond of the fatty acyl group attached at sn-2 position of phospholipids (phospholipase A2 activity), preferentially releasing fatty acyl groups with a low degree of unsaturation such as oleoyl (C18:1) and linoleoyl (C18:2) groups. Hydrolyzes low-density lipoprotein (LDL) phospholipids releasing unsaturated fatty acids that drive macrophage polarization toward an M2 phenotype. May act in an autocrine and paracrine manner. Contributes to lipid remodeling of cellular membranes at different subcellular locations and generation of lipid mediators involved in pathogen clearance. Cleaves sn-2 fatty acyl chains of cardiolipin, a major component of the inner membrane of mitochondria and bacterial membranes. Promotes phagocytosis of bacteria in macrophages through production of lysophosphatidylethanolamines. Displays bactericidal activity against Gram-positive bacteria by directly hydrolyzing phospholipids of the bacterial membrane. Promotes phagocytosis and killing of ingested fungi likely through controlling phagosome-lysosome fusion and phagosome maturation. Plays a role in biosynthesis of cysteinyl leukotrienes (CysLTs) in myeloid cells. In eosinophils, triggers perinuclear arachidonate release and LTC4 synthesis in a PLA2G4A-independent way. In neutrophils, amplifies CysLTs biosynthesis initiated by PLA2G4A. Promotes immune complex clearance in macrophages via stimulating synthesis of CysLTs, which act through CYSLTR1 to trigger phagocytosis. May regulate antigen processing in antigen-presenting cells. In pulmonary macrophages regulates IL33 production required for activation of group 2 innate lymphoid cells. May play a role in the biosynthesis of N-acyl ethanolamines that regulate energy metabolism. Hydrolyzes N-acyl phosphatidylethanolamines to N-acyl lysophosphatidylethanolamines, which are further cleaved by a lysophospholipase D to release N-acyl ethanolamines. The polypeptide is Phospholipase A2 group V (PLA2G5) (Homo sapiens (Human)).